The primary structure comprises 221 residues: Vacuolar protein sorting-associated protein 20 (221 aa).

G2 carries the N-myristoyl glycine lipid modification. Positions 72–178 (QEHLLQQASD…LNPEKMNNAK (107 aa)) form a coiled coil. The disordered stretch occupies residues 170–221 (NPEKMNNAKVANMPSTEGLPSLPQGEQTEQKEREEFATEERSDTKEPLALLS). The segment covering 197–215 (TEQKEREEFATEERSDTKE) has biased composition (basic and acidic residues).

It belongs to the SNF7 family. Core component of the ESCRT-III complex (endosomal sorting required for transport complex III). ESCRT-III appears to be sequentially assembled as a flat lattice on the endosome membrane and forms a transient 450 kDa complex that contains DID4, oligomerized SNF7, VPS20 and VPS24. SNF7 oligomerization into a membrane-associated filament is nucleated by association of SNF7 with VPS20; the process is terminated through association of VPS24, possibly by capping the SNF7 filament. VPS24 subsequently associates with DID4/VPS2. Interacts with the VPS4. Interacts with VPS25; the interaction mediates the association with the ESCRT-II complex.

The protein resides in the endosome membrane. The protein localises to the vacuole membrane. Its function is as follows. Class E VPS protein implicated in concentration and sorting of cargo proteins of the multivesicular body (MVB) for incorporation into intralumenal vesicles. The lumenal sequestrated membrane proteins will be targeted into the vacuole after fusion of the endosome with the vacuole. Acts a component of the ESCRT-III complex, which appears to be critical for late steps in MVB sorting, such as membrane invagination and final cargo sorting and recruitment of late-acting components of the sorting machinery. The MVB pathway requires the sequential function of ESCRT-O, -I,-II and -III complex assemblies. Required for the oligomerization of SNF7 into a membrane-associated filament. The VPS20-SNF7 subcomplex is responsible for the membrane association of the ESCRT-III complex. Also required for the RIM101 repressor proteolytic activation. This Saccharomyces cerevisiae (strain ATCC 204508 / S288c) (Baker's yeast) protein is Vacuolar protein sorting-associated protein 20 (VPS20).